The primary structure comprises 206 residues: UPF0502 protein Acid_1185 (206 aa).

Belongs to the UPF0502 family.

The protein is UPF0502 protein Acid_1185 of Solibacter usitatus (strain Ellin6076).